The chain runs to 81 residues: Photosystem I iron-sulfur center (81 aa).

4Fe-4S ferredoxin-type domains follow at residues 1–31 and 39–68; these read MSHK…MVPW and IASS…IRVY. Residues Cys-11, Cys-14, Cys-17, Cys-21, Cys-48, Cys-51, Cys-54, and Cys-58 each coordinate [4Fe-4S] cluster.

In terms of assembly, the cyanobacterial PSI reaction center is composed of one copy each of PsaA,B,C,D,E,F,I,J,K,L,M and X, and forms trimeric complexes. [4Fe-4S] cluster serves as cofactor.

It is found in the cellular thylakoid membrane. The enzyme catalyses reduced [plastocyanin] + hnu + oxidized [2Fe-2S]-[ferredoxin] = oxidized [plastocyanin] + reduced [2Fe-2S]-[ferredoxin]. Apoprotein for the two 4Fe-4S centers FA and FB of photosystem I (PSI); essential for photochemical activity. FB is the terminal electron acceptor of PSI, donating electrons to ferredoxin. The C-terminus interacts with PsaA/B/D and helps assemble the protein into the PSI complex. Required for binding of PsaD and PsaE to PSI. PSI is a plastocyanin/cytochrome c6-ferredoxin oxidoreductase, converting photonic excitation into a charge separation, which transfers an electron from the donor P700 chlorophyll pair to the spectroscopically characterized acceptors A0, A1, FX, FA and FB in turn. The sequence is that of Photosystem I iron-sulfur center from Rippkaea orientalis (strain PCC 8801 / RF-1) (Cyanothece sp. (strain PCC 8801)).